We begin with the raw amino-acid sequence, 149 residues long: SsrA-binding protein (149 aa).

It belongs to the SmpB family.

The protein localises to the cytoplasm. Functionally, required for rescue of stalled ribosomes mediated by trans-translation. Binds to transfer-messenger RNA (tmRNA), required for stable association of tmRNA with ribosomes. tmRNA and SmpB together mimic tRNA shape, replacing the anticodon stem-loop with SmpB. tmRNA is encoded by the ssrA gene; the 2 termini fold to resemble tRNA(Ala) and it encodes a 'tag peptide', a short internal open reading frame. During trans-translation Ala-aminoacylated tmRNA acts like a tRNA, entering the A-site of stalled ribosomes, displacing the stalled mRNA. The ribosome then switches to translate the ORF on the tmRNA; the nascent peptide is terminated with the 'tag peptide' encoded by the tmRNA and targeted for degradation. The ribosome is freed to recommence translation, which seems to be the essential function of trans-translation. This Anaplasma marginale (strain Florida) protein is SsrA-binding protein.